A 209-amino-acid polypeptide reads, in one-letter code: NADH-quinone oxidoreductase subunit C (209 aa).

This sequence belongs to the complex I 30 kDa subunit family. In terms of assembly, NDH-1 is composed of 14 different subunits. Subunits NuoB, C, D, E, F, and G constitute the peripheral sector of the complex.

It localises to the cell inner membrane. It catalyses the reaction a quinone + NADH + 5 H(+)(in) = a quinol + NAD(+) + 4 H(+)(out). Its function is as follows. NDH-1 shuttles electrons from NADH, via FMN and iron-sulfur (Fe-S) centers, to quinones in the respiratory chain. The immediate electron acceptor for the enzyme in this species is believed to be ubiquinone. Couples the redox reaction to proton translocation (for every two electrons transferred, four hydrogen ions are translocated across the cytoplasmic membrane), and thus conserves the redox energy in a proton gradient. This is NADH-quinone oxidoreductase subunit C from Phenylobacterium zucineum (strain HLK1).